Here is a 168-residue protein sequence, read N- to C-terminus: Peptide deformylase (168 aa).

Fe cation is bound by residues Cys92 and His134. Glu135 is an active-site residue. Fe cation is bound at residue His138.

The protein belongs to the polypeptide deformylase family. Fe(2+) is required as a cofactor.

The catalysed reaction is N-terminal N-formyl-L-methionyl-[peptide] + H2O = N-terminal L-methionyl-[peptide] + formate. Removes the formyl group from the N-terminal Met of newly synthesized proteins. Requires at least a dipeptide for an efficient rate of reaction. N-terminal L-methionine is a prerequisite for activity but the enzyme has broad specificity at other positions. The sequence is that of Peptide deformylase from Hahella chejuensis (strain KCTC 2396).